Reading from the N-terminus, the 172-residue chain is MFDAFTKVVSQADTRGEMLSTAQIDALSQMVAESNKRLDAVNRITSNASTIVSNAARSLFAEQPQLIAPGGNAYTSRRMAACLRDMEIILRYVTYAVFAGDASVLEDRCLNGLRETYLALGTPGSSVAVGVGKMKEAALAIVNDPAGITPGDCSALASEIASYFDRACAAVS.

N4-methylasparagine is present on asparagine 72. Positions 82 and 153 each coordinate (2R,3E)-phycocyanobilin.

Belongs to the phycobiliprotein family. In terms of assembly, the alpha and beta subunits exhibit high affinity for one another and form heterodimers. These heterodimers form heterohexamers of 3 alpha and 3 beta subunits which, in turn, aggregate into a heterododecamer consisting of 2 heterohexamers. Post-translationally, contains two covalently linked bilin chromophores.

Its subcellular location is the cellular thylakoid membrane. Light-harvesting photosynthetic bile pigment-protein from the phycobiliprotein complex (phycobilisome, PBS). Phycocyanin is the major phycobiliprotein in the PBS rod. The polypeptide is C-phycocyanin beta subunit (cpcB) (Arthrospira platensis (Spirulina platensis)).